The chain runs to 585 residues: Conglutin alpha 3 (585 aa).

Positions 1–23 (MANPFLLSLSLCLVLLYTSACLG) are cleaved as a signal peptide. 2 cysteine pairs are disulfide-bonded: Cys-32–Cys-65 and Cys-108–Cys-406. The Cupin type-1 1 domain maps to 37–258 (LNALEPDNRI…ALNIDEDTVH (222 aa)). Disordered regions lie at residues 113 to 147 (EEAQ…HFRE), 199 to 240 (EEYP…ILSG), and 283 to 402 (KWQE…NGLE). Residues 136–147 (EDSHQKIRHFRE) show a composition bias toward basic and acidic residues. Positions 211-224 (RQQHQRPSGRRHGQ) are enriched in basic residues. The span at 309 to 320 (REEEEKEEEDEP) shows a compositional bias: acidic residues. A compositionally biased stretch (basic and acidic residues) spans 338 to 350 (ERGRGRGGSEWKR). In terms of domain architecture, Cupin type-1 2 spans 412–558 (ENIADPTRAD…AFRLSLNQVS (147 aa)). The span at 565–579 (NHNPLVTPQSQSQDH) shows a compositional bias: polar residues. Residues 565 to 585 (NHNPLVTPQSQSQDHNLVKVA) form a disordered region.

The protein belongs to the 11S seed storage protein (globulins) family. Hexamer; each subunit is composed of an acidic and a basic chain derived from a single precursor and linked by a disulfide bond. Component of globulins complexes which accumulate in seeds.

Sulfur-rich seed storage protein. This protein found in the seeds of many leguminous and non-leguminous plants is the source of sulfur-containing amino acids in seed meals. In Lupinus angustifolius (Narrow-leaved blue lupine), this protein is Conglutin alpha 3.